The sequence spans 95 residues: MVYISNGQVLDGQSRSPWRLSFLTDMFWGITDFVVMFFQSIIHPNVTRRGCQNSSSSTRYDDGRGPPGHPRRMGRINHGSGPSAPPMAGGGGUGR.

The helical transmembrane segment at leucine 20 to isoleucine 42 threads the bilayer. Residues threonine 47–arginine 95 are disordered. A non-standard amino acid (selenocysteine) is located at residue selenocysteine 93.

It belongs to the selenoprotein K family.

It is found in the endoplasmic reticulum membrane. Its subcellular location is the cell membrane. Functionally, required for Ca(2+) flux in immune cells and plays a role in T-cell proliferation and in T-cell and neutrophil migration. Involved in endoplasmic reticulum-associated degradation (ERAD) of soluble glycosylated proteins. Required for cell surface expression of CD36 and involved in macrophage uptake of low-density lipoprotein and in foam cell formation. Required for palmitoylation. In Xenopus laevis (African clawed frog), this protein is Selenoprotein K (selenok).